A 27-amino-acid polypeptide reads, in one-letter code: Secretin (27 aa).

The residue at position 27 (valine 27) is a Valine amide.

Belongs to the glucagon family.

It is found in the secreted. Functionally, hormone involved in different processes, such as regulation of the pH of the duodenal content, food intake and water homeostasis. Exerts its biological effects by binding to secretin receptor (SCTR), a G-protein coupled receptor expressed in the basolateral domain of several cells. Acts as a key gastrointestinal hormone by regulating the pH of the duodenal content. Secreted by S cells of the duodenum in the crypts of Lieberkuehn and regulates the pH of the duodenum by (1) inhibiting the secretion of gastric acid from the parietal cells of the stomach and (2) stimulating the production of bicarbonate (NaHCO(3)) from the ductal cells of the pancreas. Production of bicarbonate is essential to neutralize the pH and ensure no damage is done to the small intestine by the gastric acid. In addition to regulating the pH of the duodenal content, plays a central role in diet induced thermogenesis: acts as a non-sympathetic brown fat (BAT) activator mediating prandial thermogenesis, which consequentially induces satiation. Mechanistically, secretin released by the gut after a meal binds to secretin receptor (SCTR) in brown adipocytes, activating brown fat thermogenesis by stimulating lipolysis, which is sensed in the brain and promotes satiation. Also able to stimulate lipolysis in white adipocytes. Also plays an important role in cellular osmoregulation: released into the systemic circulation in response to hyperosmolality and acts at different levels in the hypothalamus, pituitary and kidney to regulate water homeostasis. Also plays a role in the central nervous system, possibly by acting as a neuropeptide hormone: required for hippocampal synaptic function and neural progenitor cells maintenance. This is Secretin from Bos taurus (Bovine).